A 391-amino-acid polypeptide reads, in one-letter code: 3-ketoacyl-CoA thiolase (391 aa).

Residue Cys95 is the Acyl-thioester intermediate of the active site. Active-site proton acceptor residues include His347 and Cys377.

This sequence belongs to the thiolase-like superfamily. Thiolase family. Heterotetramer of two alpha chains (FadB) and two beta chains (FadA).

The protein resides in the cytoplasm. It carries out the reaction an acyl-CoA + acetyl-CoA = a 3-oxoacyl-CoA + CoA. It participates in lipid metabolism; fatty acid beta-oxidation. Its function is as follows. Catalyzes the final step of fatty acid oxidation in which acetyl-CoA is released and the CoA ester of a fatty acid two carbons shorter is formed. This is 3-ketoacyl-CoA thiolase from Ectopseudomonas oleovorans (Pseudomonas oleovorans).